The sequence spans 245 residues: 1-(5-phosphoribosyl)-5-[(5-phosphoribosylamino)methylideneamino] imidazole-4-carboxamide isomerase (245 aa).

Aspartate 7 acts as the Proton acceptor in catalysis. The Proton donor role is filled by aspartate 129.

The protein belongs to the HisA/HisF family.

It localises to the cytoplasm. The catalysed reaction is 1-(5-phospho-beta-D-ribosyl)-5-[(5-phospho-beta-D-ribosylamino)methylideneamino]imidazole-4-carboxamide = 5-[(5-phospho-1-deoxy-D-ribulos-1-ylimino)methylamino]-1-(5-phospho-beta-D-ribosyl)imidazole-4-carboxamide. Its pathway is amino-acid biosynthesis; L-histidine biosynthesis; L-histidine from 5-phospho-alpha-D-ribose 1-diphosphate: step 4/9. The sequence is that of 1-(5-phosphoribosyl)-5-[(5-phosphoribosylamino)methylideneamino] imidazole-4-carboxamide isomerase from Salmonella heidelberg (strain SL476).